The primary structure comprises 209 residues: Protein-L-isoaspartate O-methyltransferase (209 aa).

Residue Ser-60 is part of the active site.

This sequence belongs to the methyltransferase superfamily. L-isoaspartyl/D-aspartyl protein methyltransferase family.

The protein resides in the cytoplasm. It carries out the reaction [protein]-L-isoaspartate + S-adenosyl-L-methionine = [protein]-L-isoaspartate alpha-methyl ester + S-adenosyl-L-homocysteine. Its function is as follows. Catalyzes the methyl esterification of L-isoaspartyl residues in peptides and proteins that result from spontaneous decomposition of normal L-aspartyl and L-asparaginyl residues. It plays a role in the repair and/or degradation of damaged proteins. The chain is Protein-L-isoaspartate O-methyltransferase from Methanococcus vannielii (strain ATCC 35089 / DSM 1224 / JCM 13029 / OCM 148 / SB).